A 441-amino-acid chain; its full sequence is Protein kinase C and casein kinase substrate in neurons protein 1 (441 aa).

A phosphoserine mark is found at Ser2 and Ser76. Residues 10 to 280 (EEITDSFWEV…AIRGADAQED (271 aa)) enclose the F-BAR domain. Residues 23 to 272 (KRTVKRIDDG…HVYRELEQAI (250 aa)) adopt a coiled-coil conformation. Thr181 is subject to Phosphothreonine. A disordered region spans residues 310 to 380 (AAKKEKQPKK…ANGGANPFED (71 aa)). A compositionally biased stretch (basic and acidic residues) spans 311-321 (AKKEKQPKKAE). The segment covering 326–348 (SNATGAVESTSQAGDRGSVSSYD) has biased composition (polar residues). Phosphoserine occurs at positions 343, 345, 346, 358, and 362. An SH3 domain is found at 382 to 441 (AKGVRVRALYDYDGQEQDELSFKAGDELTKLGEEDEQGWCRGRLDSGQLGLYPANYVEAI). Tyr391 is modified (phosphotyrosine). Residues Ser402 and Ser427 each carry the phosphoserine modification.

This sequence belongs to the PACSIN family. As to quaternary structure, homodimer. May form heterooligomers with other PACSINs. Interacts with MAPT. Interacts with TRPV4. Interacts (via SH3 domain) with SYNJ1 and WASL. Interacts (via SH3 domain) with DNM1; the interaction is reduced by DNM1 phosphorylation. Interacts with DNM2 and DNM3. Interacts with both COBL and DBNL. Identified in a complex composed of COBL, PACSIN1 and WASL. Interacts with EHD1 and EHD3. Post-translationally, phosphorylated by casein kinase 2 (CK2) and protein kinase C (PKC). In terms of tissue distribution, highly expressed in brain (at protein level).

It is found in the cytoplasm. Its subcellular location is the cell projection. The protein resides in the synapse. It localises to the synaptosome. The protein localises to the ruffle membrane. It is found in the membrane. Its subcellular location is the cytoplasmic vesicle membrane. The protein resides in the cytosol. It localises to the cell membrane. In terms of biological role, binds to membranes via its F-BAR domain and mediates membrane tubulation. Plays a role in the reorganization of the microtubule cytoskeleton via its interaction with MAPT; this decreases microtubule stability and inhibits MAPT-induced microtubule polymerization. Plays a role in cellular transport processes by recruiting DNM1, DNM2 and DNM3 to membranes. Plays a role in the reorganization of the actin cytoskeleton and in neuron morphogenesis via its interaction with COBL and WASL, and by recruiting COBL to the cell cortex. Plays a role in the regulation of neurite formation, neurite branching and the regulation of neurite length. Required for normal synaptic vesicle endocytosis; this process retrieves previously released neurotransmitters to accommodate multiple cycles of neurotransmission. Required for normal excitatory and inhibitory synaptic transmission. This is Protein kinase C and casein kinase substrate in neurons protein 1 (Pacsin1) from Rattus norvegicus (Rat).